Reading from the N-terminus, the 304-residue chain is Acetyl-coenzyme A carboxylase carboxyl transferase subunit beta (304 aa).

Residues 23-292 (VWTKCDSCGQ…PNPEAPREGV (270 aa)) enclose the CoA carboxyltransferase N-terminal domain. Residues Cys27, Cys30, Cys46, and Cys49 each coordinate Zn(2+). The C4-type zinc finger occupies 27–49 (CDSCGQVLYRAELERNLEVCPKC). The interval 284-304 (NPEAPREGVVVPPVPDQEPEA) is disordered. The span at 295 to 304 (PPVPDQEPEA) shows a compositional bias: pro residues.

It belongs to the AccD/PCCB family. In terms of assembly, acetyl-CoA carboxylase is a heterohexamer composed of biotin carboxyl carrier protein (AccB), biotin carboxylase (AccC) and two subunits each of ACCase subunit alpha (AccA) and ACCase subunit beta (AccD). It depends on Zn(2+) as a cofactor.

The protein resides in the cytoplasm. The catalysed reaction is N(6)-carboxybiotinyl-L-lysyl-[protein] + acetyl-CoA = N(6)-biotinyl-L-lysyl-[protein] + malonyl-CoA. It participates in lipid metabolism; malonyl-CoA biosynthesis; malonyl-CoA from acetyl-CoA: step 1/1. Its function is as follows. Component of the acetyl coenzyme A carboxylase (ACC) complex. Biotin carboxylase (BC) catalyzes the carboxylation of biotin on its carrier protein (BCCP) and then the CO(2) group is transferred by the transcarboxylase to acetyl-CoA to form malonyl-CoA. The sequence is that of Acetyl-coenzyme A carboxylase carboxyl transferase subunit beta from Shigella flexneri serotype 5b (strain 8401).